A 61-amino-acid chain; its full sequence is Small ribosomal subunit protein uS14 (61 aa).

Positions 24, 27, 40, and 43 each coordinate Zn(2+).

The protein belongs to the universal ribosomal protein uS14 family. Zinc-binding uS14 subfamily. Part of the 30S ribosomal subunit. Contacts proteins S3 and S10. Zn(2+) is required as a cofactor.

Functionally, binds 16S rRNA, required for the assembly of 30S particles and may also be responsible for determining the conformation of the 16S rRNA at the A site. This chain is Small ribosomal subunit protein uS14, found in Bacillus anthracis (strain A0248).